Reading from the N-terminus, the 215-residue chain is Glycerol-3-phosphate acyltransferase (215 aa).

The next 5 membrane-spanning stretches (helical) occupy residues 14 to 34 (SSSA…AVVV), 63 to 83 (TAAA…LWLA), 92 to 112 (WGAY…PLFL), 128 to 148 (MAIE…VAVF), and 154 to 174 (LAAL…SGAA).

The protein belongs to the PlsY family. In terms of assembly, probably interacts with PlsX.

The protein localises to the cell inner membrane. It catalyses the reaction an acyl phosphate + sn-glycerol 3-phosphate = a 1-acyl-sn-glycero-3-phosphate + phosphate. It participates in lipid metabolism; phospholipid metabolism. Functionally, catalyzes the transfer of an acyl group from acyl-phosphate (acyl-PO(4)) to glycerol-3-phosphate (G3P) to form lysophosphatidic acid (LPA). This enzyme utilizes acyl-phosphate as fatty acyl donor, but not acyl-CoA or acyl-ACP. This is Glycerol-3-phosphate acyltransferase from Bordetella bronchiseptica (strain ATCC BAA-588 / NCTC 13252 / RB50) (Alcaligenes bronchisepticus).